The primary structure comprises 262 residues: Ankyrin repeat domain-containing protein 7 (262 aa).

ANK repeat units follow at residues 67-96, 100-129, 133-162, 166-195, and 199-228; these read KYRT…KINI, ENKS…DPNL, RYNT…DLEA, DGYT…DVNA, and YQRT…ELSC.

The protein is Ankyrin repeat domain-containing protein 7 (ANKRD7) of Macaca fascicularis (Crab-eating macaque).